A 492-amino-acid chain; its full sequence is Dipeptide permease D (492 aa).

The next 13 helical transmembrane spans lie at 14-34 (VVALQIWEYFSFYGMRALLIL), 49-69 (ALFSAYCSLVYVTPILGGYLA), 91-111 (LVLGASETAPVFLYLSLAIIV), 138-158 (GGFSLMYAAGNIGSIIAPIAC), 167-187 (WAMGFALAAIGMVAGLVIFLC), 212-232 (NWGWLLVLLVTAPLLIAVLFW), 236-256 (SVYALIVATVIGLAVLARIYL), 269-289 (LIVVLTAFSLLFWAFAQQGGS), 312-332 (MFQSVNAFAVMLCGMVLAWLV), 344-364 (IWGKFALGLGLMSAGFCILTL), 379-399 (LMVLGLAVMGFAELFIDPVAM), 413-433 (VLTGIYMLLSGAIANYLAGVI), and 458-478 (VFSQITWGALACVGVVLVIWL).

It belongs to the major facilitator superfamily. Proton-dependent oligopeptide transporter (POT/PTR) (TC 2.A.17) family. DtpD subfamily.

The protein localises to the cell inner membrane. In terms of biological role, probable proton-dependent permease that transports dipeptides. In Klebsiella pneumoniae (strain 342), this protein is Dipeptide permease D.